Reading from the N-terminus, the 251-residue chain is Hydroxyacylglutathione hydrolase (251 aa).

The Zn(2+) site is built by His53, His55, Asp57, His58, His110, Asp127, and His165.

The protein belongs to the metallo-beta-lactamase superfamily. Glyoxalase II family. In terms of assembly, monomer. Zn(2+) is required as a cofactor.

The enzyme catalyses an S-(2-hydroxyacyl)glutathione + H2O = a 2-hydroxy carboxylate + glutathione + H(+). It participates in secondary metabolite metabolism; methylglyoxal degradation; (R)-lactate from methylglyoxal: step 2/2. In terms of biological role, thiolesterase that catalyzes the hydrolysis of S-D-lactoyl-glutathione to form glutathione and D-lactic acid. The polypeptide is Hydroxyacylglutathione hydrolase (Shigella dysenteriae serotype 1 (strain Sd197)).